We begin with the raw amino-acid sequence, 1079 residues long: Eukaryotic translation initiation factor 5B (1079 aa).

Residues 1–478 form a disordered region; it reads MGKKGKKSGY…QAAPAESNVS (478 aa). Over residues 22–38 the composition is skewed to polar residues; it reads SGQNEYLDNTSQDSPQN. Residues 57–67 are compositionally biased toward basic residues; that stretch reads SKKKKGKKNKG. 3 positions are modified to phosphoserine: Ser73, Ser77, and Ser82. The segment covering 105–114 has biased composition (basic residues); the sequence is KKGKKGKKSK. Residue Ser127 is modified to Phosphoserine. The segment covering 160–169 has biased composition (low complexity); the sequence is NNNESEAAAP. The span at 173–192 shows a compositional bias: basic and acidic residues; sequence PEVRVKTKKEKEREKKEREK. Residues 193–204 show a composition bias toward basic residues; it reads LRKKQQQAKKKG. The segment covering 207-233 has biased composition (polar residues); sequence GEDTLASSEVSSEVDISTPAENDSSAK. Positions 253 to 293 are enriched in basic and acidic residues; it reads MLEEKRAREEEEQRIREEEARIAEEEKRLAEVEEARKEEAR. 2 stretches are compositionally biased toward low complexity: residues 321-334 and 361-376; these read QQAL…QMLE and RSGT…LESS. Thr364 is subject to Phosphothreonine. Positions 385-408 are enriched in basic and acidic residues; that stretch reads EPQKDSKDDSEKVEKETEVERKEE. Residues 409 to 431 are compositionally biased toward acidic residues; it reads NEAEAEAVFDDWEAALEEPEVAE. The span at 436–466 shows a compositional bias: basic and acidic residues; it reads VTEKKETDIKSDAVEHSIKDKEDSKTDKVDD. In terms of domain architecture, tr-type G spans 482 to 700; it reads LRSPICCILG…LISLTQTRMS (219 aa). The interval 491 to 498 is G1; the sequence is GHVDTGKT. 491–498 lines the GTP pocket; the sequence is GHVDTGKT. Residues 516–520 form a G2 region; it reads GITQQ. The G3 stretch occupies residues 555–558; it reads DTPG. The tract at residues 609–612 is G4; the sequence is NKVD. The interval 677–679 is G5; that stretch reads SAQ.

It belongs to the TRAFAC class translation factor GTPase superfamily. Classic translation factor GTPase family. IF-2 subfamily. It depends on a monovalent cation as a cofactor.

The protein localises to the cytoplasm. The catalysed reaction is GTP + H2O = GDP + phosphate + H(+). In terms of biological role, plays a role in translation initiation. Translational GTPase that catalyzes the joining of the 40S and 60S subunits to form the 80S initiation complex with the initiator methionine-tRNA in the P-site base paired to the start codon. GTP binding and hydrolysis induces conformational changes in the enzyme that renders it active for productive interactions with the ribosome. The release of the enzyme after formation of the initiation complex is a prerequisite to form elongation-competent ribosomes. This Schizosaccharomyces pombe (strain 972 / ATCC 24843) (Fission yeast) protein is Eukaryotic translation initiation factor 5B.